The sequence spans 197 residues: Putative carbonic anhydrase YvdA (197 aa).

Zn(2+) is bound by residues C41, D43, H99, and C102.

The protein belongs to the beta-class carbonic anhydrase family. The cofactor is Zn(2+).

It carries out the reaction hydrogencarbonate + H(+) = CO2 + H2O. Functionally, reversible hydration of carbon dioxide. This chain is Putative carbonic anhydrase YvdA (yvdA), found in Bacillus subtilis (strain 168).